The chain runs to 186 residues: Quinone reductase (186 aa).

FMN-binding positions include 13–20 (SLRKESYN), 80–83 (EHNR), and S116.

Belongs to the SsuE family. In terms of assembly, homotetramer. Dimer of dimers. The tetrameric configuration has a central role in chromate reductase activity. Requires FMN as cofactor.

The enzyme catalyses a quinone + NADH + H(+) = a quinol + NAD(+). It carries out the reaction a quinone + NADPH + H(+) = a quinol + NADP(+). It catalyses the reaction Cr(6+) + 2 NADH + O2 = Cr(3+) + superoxide + 2 NAD(+) + 2 H(+). The catalysed reaction is Cr(6+) + 2 NADPH + O2 = Cr(3+) + superoxide + 2 NADP(+) + 2 H(+). With respect to regulation, non-competitively inhibited by sulfate. Functionally, catalyzes the reduction of quinones. Acts by simultaneous two-electron transfer, avoiding formation of highly reactive semiquinone intermediates and producing quinols that promote tolerance of H(2)O(2). Quinone reduction is probably the primary biological role of ChrR. Can also reduce toxic chromate to insoluble and less toxic Cr(3+). Catalyzes the transfer of three electrons to Cr(6+) producing Cr(3+) and one electron to molecular oxygen. This reaction produces transiently a minimal amount of the toxic Cr(5+) species and reactive oxygen species (ROS). Chromate reduction protects the cell against chromate toxicity, but is likely a secondary activity. In Pseudomonas putida (Arthrobacter siderocapsulatus), this protein is Quinone reductase (chrR).